The primary structure comprises 302 residues: Porphobilinogen deaminase (302 aa).

At C234 the chain carries S-(dipyrrolylmethanemethyl)cysteine.

Belongs to the HMBS family. As to quaternary structure, monomer. Requires dipyrromethane as cofactor.

The catalysed reaction is 4 porphobilinogen + H2O = hydroxymethylbilane + 4 NH4(+). It functions in the pathway porphyrin-containing compound metabolism; protoporphyrin-IX biosynthesis; coproporphyrinogen-III from 5-aminolevulinate: step 2/4. In terms of biological role, tetrapolymerization of the monopyrrole PBG into the hydroxymethylbilane pre-uroporphyrinogen in several discrete steps. The sequence is that of Porphobilinogen deaminase from Corynebacterium glutamicum (strain R).